The primary structure comprises 160 residues: MSDEEHHFESKADAGASKTYPQQAGTIRKNGYIVIKGRPCKVVEVSTSKTGKHGHAKCHFVAIDIFNGKKLEDIVPSSHNCDVPHVNRTDYQLIDISEDGFVSLLTESGNTKDDLRLPTDESLLKQVKDGFQEGKDLVVSVMSAMGEEQINAIKDIGTKN.

Basic and acidic residues predominate over residues methionine 1–alanine 12. The segment at methionine 1 to proline 21 is disordered. The residue at position 52 (lysine 52) is a Hypusine.

This sequence belongs to the eIF-5A family. In terms of processing, lys-52 undergoes hypusination, a unique post-translational modification that consists in the addition of a butylamino group from spermidine to lysine side chain, leading to the formation of the unusual amino acid hypusine. eIF-5As are the only known proteins to undergo this modification, which is essential for their function.

Functionally, translation factor that promotes translation elongation and termination, particularly upon ribosome stalling at specific amino acid sequence contexts. Binds between the exit (E) and peptidyl (P) site of the ribosome and promotes rescue of stalled ribosome: specifically required for efficient translation of polyproline-containing peptides as well as other motifs that stall the ribosome. Acts as a ribosome quality control (RQC) cofactor by joining the RQC complex to facilitate peptidyl transfer during CAT tailing step. This chain is Eukaryotic translation initiation factor 5A-3 (EIF5A3), found in Solanum tuberosum (Potato).